A 193-amino-acid polypeptide reads, in one-letter code: Potassium-transporting ATPase KdpC subunit (193 aa).

A helical transmembrane segment spans residues 14-34 (ITFTFLVLCGLVYPLIVTGIA).

It belongs to the KdpC family. In terms of assembly, the system is composed of three essential subunits: KdpA, KdpB and KdpC.

The protein localises to the cell membrane. Its function is as follows. Part of the high-affinity ATP-driven potassium transport (or Kdp) system, which catalyzes the hydrolysis of ATP coupled with the electrogenic transport of potassium into the cytoplasm. This subunit acts as a catalytic chaperone that increases the ATP-binding affinity of the ATP-hydrolyzing subunit KdpB by the formation of a transient KdpB/KdpC/ATP ternary complex. This is Potassium-transporting ATPase KdpC subunit from Bacillus cereus (strain G9842).